Consider the following 159-residue polypeptide: Small ribosomal subunit protein bS16 (159 aa).

Over residues 102–119 (GIPEAAEEAPATESVAEA) the composition is skewed to low complexity. Residues 102 to 159 (GIPEAAEEAPATESVAEAEVADVPESELSEAATETAAAELSPPEAEVEKPQVEEAVEA) are disordered. A compositionally biased stretch (acidic residues) spans 120 to 129 (EVADVPESEL). A compositionally biased stretch (low complexity) spans 130–145 (SEAATETAAAELSPPE).

It belongs to the bacterial ribosomal protein bS16 family.

The protein is Small ribosomal subunit protein bS16 of Synechococcus sp. (strain JA-2-3B'a(2-13)) (Cyanobacteria bacterium Yellowstone B-Prime).